The sequence spans 703 residues: Centrosomal protein of 63 kDa (703 aa).

Met1 carries the post-translational modification N-acetylmethionine. Coiled-coil stretches lie at residues 22–199 (EAEL…ESVE), 242–306 (MTVL…QHAV), 353–533 (LEGS…STQM), and 676–703 (HILE…TALK). Ser278 bears the Phosphoserine mark.

Belongs to the CEP63 family. In terms of assembly, interacts with CEP152 and CDK1; these interactions recruit both ligands to centrosomes. Interacts with CDK2, CDK5RAP2, WDR62, CEP90, KIAA0753/moonraker and CCDC14. CEP63, CDK5RAP2, CEP152, WDR62 are proposed to form a stepwise assembled complex at the centrosome forming a ring near parental centrioles. Interacts with CCDC57; the interaction is required for their location to proximal end of centrioles. Interacts with FXR1; promoting its stabilization. (Microbial infection) Interacts with zika virus serine protease NS3; this interaction disorganizes the centrosome. Post-translationally, polyubiquitinated via 'Lys-48'-linked ubiquitin, leading to its degradation. Deubiquitinated by USP36, promoting its stabilization.

The protein localises to the cytoplasm. It localises to the cytoskeleton. It is found in the microtubule organizing center. The protein resides in the centrosome. Its subcellular location is the centriole. The protein localises to the centriolar satellite. Functionally, required for normal spindle assembly. Plays a key role in mother-centriole-dependent centriole duplication; the function seems also to involve CEP152, CDK5RAP2 and WDR62 through a stepwise assembled complex at the centrosome that recruits CDK2 required for centriole duplication. Reported to be required for centrosomal recruitment of CEP152; however, this function has been questioned. Also recruits CDK1 to centrosomes. Plays a role in DNA damage response. Following DNA damage, such as double-strand breaks (DSBs), is removed from centrosomes; this leads to the inactivation of spindle assembly and delay in mitotic progression. Promotes stabilization of FXR1 protein by inhibiting FXR1 ubiquitination. The protein is Centrosomal protein of 63 kDa of Homo sapiens (Human).